We begin with the raw amino-acid sequence, 224 residues long: Small ribosomal subunit protein uS3 (224 aa).

The region spanning 39–107 (IREFLKKKPS…DVWVEIAEVK (69 aa)) is the KH type-2 domain.

Belongs to the universal ribosomal protein uS3 family. Part of the 30S ribosomal subunit. Forms a tight complex with proteins S10 and S14.

Its function is as follows. Binds the lower part of the 30S subunit head. Binds mRNA in the 70S ribosome, positioning it for translation. In Chlamydia muridarum (strain MoPn / Nigg), this protein is Small ribosomal subunit protein uS3.